The sequence spans 348 residues: D-erythrose-4-phosphate dehydrogenase (348 aa).

NAD(+) contacts are provided by residues 12 to 13 (RI) and Arg-81. Residues 154–156 (SCT), Arg-200, 213–214 (TK), and Arg-236 each bind substrate. The Nucleophile role is filled by Cys-155. NAD(+) is bound at residue Asn-318.

Belongs to the glyceraldehyde-3-phosphate dehydrogenase family. Epd subfamily. As to quaternary structure, homotetramer.

It localises to the cytoplasm. It carries out the reaction D-erythrose 4-phosphate + NAD(+) + H2O = 4-phospho-D-erythronate + NADH + 2 H(+). It participates in cofactor biosynthesis; pyridoxine 5'-phosphate biosynthesis; pyridoxine 5'-phosphate from D-erythrose 4-phosphate: step 1/5. Functionally, catalyzes the NAD-dependent conversion of D-erythrose 4-phosphate to 4-phosphoerythronate. The polypeptide is D-erythrose-4-phosphate dehydrogenase (Salmonella paratyphi B (strain ATCC BAA-1250 / SPB7)).